The following is a 269-amino-acid chain: uncharacterized protein (269 aa).

The next 6 membrane-spanning stretches (helical) occupy residues 21 to 43, 48 to 70, 121 to 143, 147 to 166, 205 to 227, and 242 to 264; these read LNVWSITLFQNFRLTAELIILFT, LFLIPVMNVFAFFIHNVVNFSLI, YLILLFVSLLILGLITGITVFTF, FIIAYLIFIVLLLILYFWII, SLEVLFSSFVIGFFSLFIFLFQF, and FVAFSNTLLIYLFGVISVSYLLW.

It is found in the cell membrane. This is an uncharacterized protein from Aquifex aeolicus (strain VF5).